Reading from the N-terminus, the 118-residue chain is Large ribosomal subunit protein bL19 (118 aa).

Belongs to the bacterial ribosomal protein bL19 family.

In terms of biological role, this protein is located at the 30S-50S ribosomal subunit interface and may play a role in the structure and function of the aminoacyl-tRNA binding site. This Campylobacter jejuni subsp. doylei (strain ATCC BAA-1458 / RM4099 / 269.97) protein is Large ribosomal subunit protein bL19.